A 412-amino-acid polypeptide reads, in one-letter code: L-cysteine:1D-myo-inositol 2-amino-2-deoxy-alpha-D-glucopyranoside ligase (412 aa).

Cys-43 provides a ligand contact to Zn(2+). L-cysteinyl-5'-AMP is bound by residues 43–46, Thr-58, and 81–83; these read CGIT and NVT. Positions 45–55 match the 'HIGH' region motif; it reads ITPYDATHLGH. A 'ERGGDP' region motif is present at residues 187-192; that stretch reads ERGGDP. Residue Trp-227 participates in L-cysteinyl-5'-AMP binding. Residue Cys-231 participates in Zn(2+) binding. Residue 249 to 251 participates in L-cysteinyl-5'-AMP binding; that stretch reads GSD. His-256 lines the Zn(2+) pocket. Ile-283 contributes to the L-cysteinyl-5'-AMP binding site. Residues 289 to 293 carry the 'KMSKS' region motif; it reads KMSKS.

Belongs to the class-I aminoacyl-tRNA synthetase family. MshC subfamily. In terms of assembly, monomer. Zn(2+) is required as a cofactor.

The enzyme catalyses 1D-myo-inositol 2-amino-2-deoxy-alpha-D-glucopyranoside + L-cysteine + ATP = 1D-myo-inositol 2-(L-cysteinylamino)-2-deoxy-alpha-D-glucopyranoside + AMP + diphosphate + H(+). Functionally, catalyzes the ATP-dependent condensation of GlcN-Ins and L-cysteine to form L-Cys-GlcN-Ins. The sequence is that of L-cysteine:1D-myo-inositol 2-amino-2-deoxy-alpha-D-glucopyranoside ligase from Saccharopolyspora erythraea (strain ATCC 11635 / DSM 40517 / JCM 4748 / NBRC 13426 / NCIMB 8594 / NRRL 2338).